Reading from the N-terminus, the 1255-residue chain is MSKVIQKKNHWTGRVHECTVKRGPQGELGVTVLGGAEHGEFPYVGAVAAAEAAGLPGGGEGPKLAEGELLLEVQGVRVSGLPRYDVLGVIDSCKEAVTFKAVRQGGRLNKDLRHFLNQRFQKGSPDHELQQTIRDNLYRHAVPCTTRSPREGEVPGVDYSFLTVKEFLDLEQSGTLLEVGTYEGNYYGTPKPPSQPVSGKVITTDALHSLQSGSKQSTPKRTKSYNDMQNAGIVHTENEEEEDVPEMNSSFTADSGDQDEPTLQEATLPPVNSSALAAPITDPSQKFPQYLPLSAEDNLGPLPENWEMAYTENGEVYFIDHNAKTTSWLDPRCLNKQQKPLEECEDDEGVHTEELDSELELPAGWEKIEDPVYGVYYVDHINRKTQYENPVLEAKRKRQLEQQQQQQQHQQQPQQPQPPQPEEWTEDHASVVPPVAPSHPPSNPEPAREAPLQGKPFFTRNPSELEGKFIHTKLRKSSRGFGFTVVGGDEPDEFLQIKSLVLDGPAALDGKMETGDVIVSVNDTCVLGHTHAQVVKIFQSIPIGASVDLELCRGYPLPFDPDDPNTSLVTSVAILDKEPIIVNGQETYDSPASHSSKTGKVSNMKDARPSSPADVASNSSHGYPNDTVSLASSIATQPELITVHIVKGPMGFGFTIADSPGGGGQRVKQIVDSPRCRGLKEGDLIVEVNKRNVQALTHNQVVDMLIECPKGSEVTLLVQRGGLPVPKKSPKSQPLERKDSQNSSQHSVSSLRSLHTASPSHSAQVLPEYPPADVPAPDQTDSSGQKKPDPFKIWAQSRSMYEDRPMSPSPASGLSKGERDREINSTNFGECQIPDYQEQDIFLWRKETGFGFRILGGNEPGEPIYIGHIVPLGAADTDGRLRSGDELICVDGTPVIGKSHQLVVQLMQQAAKQGHVNLTVRRKVVFTVPKAENEVPSPASSHHSSNQPASLTEEKRTPQGSQNSLNTVSSGSGSTSGIGSGGGGGSGVVSAVLQPYDVEIRRGENEGFGFVIVSSVSRPEAGTTFAGNACVAMPHKIGRIIEGSPADRCGKLKVGDRILAVNGCSITNKSHSDIVNLIKEAGNTVTLRIIPGDESSNATLLTNAEKIATITTTHAPSQQGTQETRTTTKPKPDSQFEFKGPQATQEQDFYTVELERGAKGFGFSLRGGREYNMDLYVLRLAEDGPAERCGKMRIGDEILEINGETTKNMKHSRAIELIKNGGRRVRLFLRRGDGSVPEYGGSNYENIPSFPGMTP.

In terms of domain architecture, PDZ 1 spans 17–105 (ECTVKRGPQG…AVTFKAVRQG (89 aa)). Residues 96-287 (AVTFKAVRQG…APITDPSQKF (192 aa)) enclose the Guanylate kinase-like domain. An ATP-binding site is contributed by 103-110 (RQGGRLNK). 2 disordered regions span residues 208 to 227 (HSLQ…SYND) and 235 to 265 (HTEN…TLQE). A WW 1 domain is found at 300-333 (GPLPENWEMAYTENGEVYFIDHNAKTTSWLDPRC). Residue S357 is modified to Phosphoserine. One can recognise a WW 2 domain in the interval 359 to 392 (LELPAGWEKIEDPVYGVYYVDHINRKTQYENPVL). Residues 395 to 462 (KRKRQLEQQQ…QGKPFFTRNP (68 aa)) form a disordered region. The segment covering 402-414 (QQQQQQQHQQQPQ) has biased composition (low complexity). Over residues 434-444 (PVAPSHPPSNP) the composition is skewed to pro residues. The 83-residue stretch at 471–553 (HTKLRKSSRG…GASVDLELCR (83 aa)) folds into the PDZ 2 domain. A compositionally biased stretch (polar residues) spans 585–601 (QETYDSPASHSSKTGKV). Disordered stretches follow at residues 585–622 (QETY…SSHG) and 719–820 (QRGG…GERD). In terms of domain architecture, PDZ 3 spans 642–720 (TVHIVKGPMG…GSEVTLLVQR (79 aa)). A phosphoserine mark is found at S729 and S740. The segment covering 741-755 (QNSSQHSVSSLRSLH) has biased composition (low complexity). S799 is subject to Phosphoserine. The region spanning 840–922 (DIFLWRKETG…QGHVNLTVRR (83 aa)) is the PDZ 4 domain. The tract at residues 932 to 984 (ENEVPSPASSHHSSNQPASLTEEKRTPQGSQNSLNTVSSGSGSTSGIGSGGGG) is disordered. 2 stretches are compositionally biased toward polar residues: residues 938-950 (PASS…QPAS) and 958-967 (PQGSQNSLNT). Residues 974–984 (STSGIGSGGGG) are compositionally biased toward gly residues. One can recognise a PDZ 5 domain in the interval 997-1093 (DVEIRRGENE…TVTLRIIPGD (97 aa)). S1070 carries the post-translational modification Phosphoserine. The span at 1111–1129 (TTTHAPSQQGTQETRTTTK) shows a compositional bias: polar residues. The disordered stretch occupies residues 1111–1142 (TTTHAPSQQGTQETRTTTKPKPDSQFEFKGPQ). The region spanning 1151-1233 (TVELERGAKG…RVRLFLRRGD (83 aa)) is the PDZ 6 domain.

As to quaternary structure, part of a complex composed of AMOTL2, MAGI1 and CDH5, within the complex AMOTL2 acts as a scaffold protein for the interaction of MAGI1 with CDH5. The complex is required for coupling actin fibers to cell junctions in endothelial cells. Interacts through its WW 2 domain with SYNPO and through its PDZ 5 domain with ACTN4. Interacts with cytoplasmic domain of ADGRB1. Interacts via its WW domains with DRPLA. Interacts with ESAM, LRP2 and CXADR. May interact with CTNNB1. Interacts through its PDZ 1 domain with NET1. Interacts with ASIC3 and AMOT. Interacts with FCHSD2. Interacts with IGSF5/JAM4 and through its PDZ 2 and 3 domains with NPHS1 forming a tripartite complex. Interacts with DDN. May interact (via PDZ domain) with RAPGEF2. Interacts with DLL1. Interacts with KCNJ10 and possibly with KCNJ10/KCNJ16 heterodimer; this interaction may facilitate KCNJ10/KCNJ16 potassium channel expression at the basolateral membrane in kidney tubular cells. Interacts with PRRG4 (via cytoplasmic domain).

It localises to the cell junction. It is found in the tight junction. Its subcellular location is the cytoplasm. The protein resides in the membrane. Plays a role in coupling actin fibers to cell junctions in endothelial cells, via its interaction with AMOTL2 and CDH5. May regulate acid-induced ASIC3 currents by modulating its expression at the cell surface. The polypeptide is Membrane-associated guanylate kinase, WW and PDZ domain-containing protein 1 (Magi1) (Rattus norvegicus (Rat)).